A 129-amino-acid polypeptide reads, in one-letter code: Cocaine- and amphetamine-regulated transcript protein (129 aa).

The signal sequence occupies residues 1 to 27 (MESSRLRLLPVLGAALLLLLPLLGAGA). Tyr41 carries the phosphotyrosine modification. At Ser48 the chain carries Phosphoserine. 3 disulfides stabilise this stretch: Cys95–Cys113, Cys101–Cys121, and Cys115–Cys128.

The protein belongs to the CART family. As to expression, neuroendocrine tissues. Predominantly expressed in the hypothalamus, pituitary, and longitudinal muscle-myenteric plexus. Abundant expression is also seen in the midbrain/thalamus and eye. A lower level expression is seen in the other brain regions and adrenal.

Its subcellular location is the secreted. Its function is as follows. Satiety factor closely associated with the actions of leptin and neuropeptide y; this anorectic peptide inhibits both normal and starvation-induced feeding and completely blocks the feeding response induced by neuropeptide Y and regulated by leptin in the hypothalamus. The chain is Cocaine- and amphetamine-regulated transcript protein (Cartpt) from Rattus norvegicus (Rat).